The primary structure comprises 281 residues: 2-dehydro-3-deoxyphosphooctonate aldolase (281 aa).

It belongs to the KdsA family.

It is found in the cytoplasm. The enzyme catalyses D-arabinose 5-phosphate + phosphoenolpyruvate + H2O = 3-deoxy-alpha-D-manno-2-octulosonate-8-phosphate + phosphate. It participates in carbohydrate biosynthesis; 3-deoxy-D-manno-octulosonate biosynthesis; 3-deoxy-D-manno-octulosonate from D-ribulose 5-phosphate: step 2/3. Its pathway is bacterial outer membrane biogenesis; lipopolysaccharide biosynthesis. The chain is 2-dehydro-3-deoxyphosphooctonate aldolase from Pseudomonas syringae pv. syringae (strain B728a).